The chain runs to 181 residues: Large ribosomal subunit protein uL5 (181 aa).

It belongs to the universal ribosomal protein uL5 family. In terms of assembly, part of the 50S ribosomal subunit; part of the 5S rRNA/L5/L18/L25 subcomplex. Contacts the 5S rRNA and the P site tRNA. Forms a bridge to the 30S subunit in the 70S ribosome.

This is one of the proteins that bind and probably mediate the attachment of the 5S RNA into the large ribosomal subunit, where it forms part of the central protuberance. In the 70S ribosome it contacts protein S13 of the 30S subunit (bridge B1b), connecting the 2 subunits; this bridge is implicated in subunit movement. Contacts the P site tRNA; the 5S rRNA and some of its associated proteins might help stabilize positioning of ribosome-bound tRNAs. The chain is Large ribosomal subunit protein uL5 from Mycoplasmopsis pulmonis (strain UAB CTIP) (Mycoplasma pulmonis).